Here is a 255-residue protein sequence, read N- to C-terminus: Putative ankyrin repeat protein R880 (255 aa).

ANK repeat units lie at residues 79 to 109 (SGIN…DIHY), 110 to 139 (KTDY…NINT), 141 to 169 (DCYA…NVRK), 171 to 199 (RDLA…DVRS), and 201 to 229 (KNYA…NFRV).

The protein is Putative ankyrin repeat protein R880 of Acanthamoeba polyphaga (Amoeba).